A 250-amino-acid chain; its full sequence is Indole-3-glycerol phosphate synthase (250 aa).

The protein belongs to the TrpC family.

The enzyme catalyses 1-(2-carboxyphenylamino)-1-deoxy-D-ribulose 5-phosphate + H(+) = (1S,2R)-1-C-(indol-3-yl)glycerol 3-phosphate + CO2 + H2O. It functions in the pathway amino-acid biosynthesis; L-tryptophan biosynthesis; L-tryptophan from chorismate: step 4/5. The chain is Indole-3-glycerol phosphate synthase from Bacillus velezensis (strain DSM 23117 / BGSC 10A6 / LMG 26770 / FZB42) (Bacillus amyloliquefaciens subsp. plantarum).